The following is a 346-amino-acid chain: MNIFNTNPFKAVSFVESAVKKALETSGYLIADCKYDGVRGNIVVDNVAEAAWLSRVSKFIPALEHLNGFDKRWQQLLNDDRCIFPDGFMLDGELMVKGVDFNTGSGLLRTKWVKRDNMGFHLTNVPTKLTPKGREVIDGKFEFHLDPKRLSVRLYAVMPIHIAESGEDYDVQNLLMPYHVEAMRSLLVEYFPEIEWLIAETYEVYDMDSLTELYEEKRAEGHEGLIVKDPQGIYKRGKKSGWWKLKPECEADGIIQGVNWGTEGLANEGKVIGFSVLLETGRLVDANNISRALMDEFTSNVKAHGEDFYNGWACQVNYMEATPDGSLRHPSFEKFRGTEDNPQEKM.

Residues 32–35 (DCKY), Arg39, 55–57 (RVS), Glu93, Glu142, and Arg149 contribute to the ATP site. Lys34 (N6-AMP-lysine intermediate) is an active-site residue. Glu223 provides a ligand contact to a divalent metal cation. ATP contacts are provided by Lys238 and Lys244.

This sequence belongs to the ATP-dependent DNA ligase family. It depends on a divalent metal cation as a cofactor.

The enzyme catalyses ATP + (deoxyribonucleotide)n-3'-hydroxyl + 5'-phospho-(deoxyribonucleotide)m = (deoxyribonucleotide)n+m + AMP + diphosphate.. In terms of biological role, DNA ligase, which is expressed in the early stage of lytic development, has been implicated in T7 DNA synthesis and genetic recombination. It may also play a role in T7 DNA repair. In Enterobacteria phage T3 (Bacteriophage T3), this protein is DNA ligase (1.3).